The sequence spans 233 residues: MNHFINLLVAEGFVRTNEPLTDQLVVHSVAGSGKSTLIRKFLEEQPLARAYTHCRADPPNLEGRFIQPFKGPCPDHFNILDEYCKEPISAKFQVLIADPLQYRTQHLRPHYVNHKSHRLGPETCKLLSSLGIKVESHRRDRDVVTLSGIFGSPILGQAIALDRSASDLLRAHGIQALCPIESIGQEYPVVTVVSSEPLRNVRFKDQVYIALSRHTEQLHVLSPEFPHTTSRPQ.

Positions 1 to 133 (MNHFINLLVA…CKLLSSLGIK (133 aa)) constitute a (+)RNA virus helicase ATP-binding domain. The (+)RNA virus helicase C-terminal domain maps to 134–233 (VESHRRDRDV…EFPHTTSRPQ (100 aa)).

The protein belongs to the Tymovirales TGBp1 protein family. Homodimer and homooligomer. Interacts with capsid protein. Interacts with host AGO1; this interaction targets the host protein for degradation, thereby suppressing the antiviral RNA silencing.

It localises to the host cytoplasm. In terms of biological role, transports viral genome to neighboring plant cells directly through plasmosdesmata, without any budding. The movement protein allows efficient cell to cell propagation, by bypassing the host cell wall barrier. Increases plasmodesma size exclusion limit. Acts as a suppressor of RNA-mediated gene silencing, also known as post-transcriptional gene silencing (PTGS), a mechanism of plant viral defense that limits the accumulation of viral RNAs. This is Movement and silencing protein TGBp1 from Carica papaya (Papaya).